The following is a 323-amino-acid chain: tRNA U34 carboxymethyltransferase (323 aa).

Residues Lys91, Trp105, Lys110, Gly130, 152–154 (DPT), 181–182 (IE), Met196, Tyr200, and Arg315 contribute to the carboxy-S-adenosyl-L-methionine site.

It belongs to the class I-like SAM-binding methyltransferase superfamily. CmoB family. As to quaternary structure, homotetramer.

It carries out the reaction carboxy-S-adenosyl-L-methionine + 5-hydroxyuridine(34) in tRNA = 5-carboxymethoxyuridine(34) in tRNA + S-adenosyl-L-homocysteine + H(+). Catalyzes carboxymethyl transfer from carboxy-S-adenosyl-L-methionine (Cx-SAM) to 5-hydroxyuridine (ho5U) to form 5-carboxymethoxyuridine (cmo5U) at position 34 in tRNAs. The chain is tRNA U34 carboxymethyltransferase from Photorhabdus laumondii subsp. laumondii (strain DSM 15139 / CIP 105565 / TT01) (Photorhabdus luminescens subsp. laumondii).